Reading from the N-terminus, the 341-residue chain is L-threonine 3-dehydrogenase (341 aa).

Cysteine 38 contributes to the Zn(2+) binding site. Residues threonine 40 and histidine 43 each act as charge relay system in the active site. Positions 63, 64, 93, 96, 99, and 107 each coordinate Zn(2+). Residues isoleucine 175, aspartate 195, arginine 200, 262–264 (LGI), and 286–287 (IY) contribute to the NAD(+) site.

This sequence belongs to the zinc-containing alcohol dehydrogenase family. As to quaternary structure, homotetramer. Zn(2+) is required as a cofactor.

It localises to the cytoplasm. It catalyses the reaction L-threonine + NAD(+) = (2S)-2-amino-3-oxobutanoate + NADH + H(+). It functions in the pathway amino-acid degradation; L-threonine degradation via oxydo-reductase pathway; glycine from L-threonine: step 1/2. In terms of biological role, catalyzes the NAD(+)-dependent oxidation of L-threonine to 2-amino-3-ketobutyrate. This chain is L-threonine 3-dehydrogenase, found in Escherichia coli O157:H7.